The following is a 122-amino-acid chain: Large ribosomal subunit protein uL14 (122 aa).

The protein belongs to the universal ribosomal protein uL14 family. Part of the 50S ribosomal subunit. Forms a cluster with proteins L3 and L19. In the 70S ribosome, L14 and L19 interact and together make contacts with the 16S rRNA in bridges B5 and B8.

Functionally, binds to 23S rRNA. Forms part of two intersubunit bridges in the 70S ribosome. The sequence is that of Large ribosomal subunit protein uL14 from Chloroflexus aurantiacus (strain ATCC 29366 / DSM 635 / J-10-fl).